The chain runs to 136 residues: Small ribosomal subunit protein eS6 (136 aa).

Belongs to the eukaryotic ribosomal protein eS6 family.

In Methanosarcina mazei (strain ATCC BAA-159 / DSM 3647 / Goe1 / Go1 / JCM 11833 / OCM 88) (Methanosarcina frisia), this protein is Small ribosomal subunit protein eS6.